The chain runs to 185 residues: Ribosome-recycling factor (185 aa).

Belongs to the RRF family.

It is found in the cytoplasm. In terms of biological role, responsible for the release of ribosomes from messenger RNA at the termination of protein biosynthesis. May increase the efficiency of translation by recycling ribosomes from one round of translation to another. The polypeptide is Ribosome-recycling factor (Neorickettsia sennetsu (strain ATCC VR-367 / Miyayama) (Ehrlichia sennetsu)).